The following is a 442-amino-acid chain: tRNA-2-methylthio-N(6)-dimethylallyladenosine synthase (442 aa).

One can recognise an MTTase N-terminal domain in the interval 5 to 122; the sequence is KKVFIKTLGC…LPEMIKRKQS (118 aa). The [4Fe-4S] cluster site is built by C14, C51, C85, C159, C163, and C166. The Radical SAM core domain maps to 145–378; it reads KAEGAKAYVS…DLLNSNAQII (234 aa). The 63-residue stretch at 380–442 folds into the TRAM domain; it reads RQMVGTEQRI…LPNSLRGELI (63 aa).

It belongs to the methylthiotransferase family. MiaB subfamily. Monomer. The cofactor is [4Fe-4S] cluster.

It localises to the cytoplasm. The catalysed reaction is N(6)-dimethylallyladenosine(37) in tRNA + (sulfur carrier)-SH + AH2 + 2 S-adenosyl-L-methionine = 2-methylsulfanyl-N(6)-dimethylallyladenosine(37) in tRNA + (sulfur carrier)-H + 5'-deoxyadenosine + L-methionine + A + S-adenosyl-L-homocysteine + 2 H(+). Its function is as follows. Catalyzes the methylthiolation of N6-(dimethylallyl)adenosine (i(6)A), leading to the formation of 2-methylthio-N6-(dimethylallyl)adenosine (ms(2)i(6)A) at position 37 in tRNAs that read codons beginning with uridine. In Francisella philomiragia subsp. philomiragia (strain ATCC 25017 / CCUG 19701 / FSC 153 / O#319-036), this protein is tRNA-2-methylthio-N(6)-dimethylallyladenosine synthase.